We begin with the raw amino-acid sequence, 315 residues long: Oxalate oxidoreductase subunit delta (315 aa).

4Fe-4S ferredoxin-type domains lie at 252–280 (QRPI…TRTE) and 281–310 (EGPV…NVPE). [4Fe-4S] cluster is bound by residues C261, C264, C267, C271, C290, C293, C296, and C300.

Dimer of heterotrimer of one alpha, one beta and one delta subunit. It depends on [4Fe-4S] cluster as a cofactor.

It carries out the reaction oxidized 2[4Fe-4S]-[ferredoxin] + oxalate = reduced 2[4Fe-4S]-[ferredoxin] + 2 CO2. Its function is as follows. Catalyzes the anaerobic oxidation of oxalate using a broad range of electron acceptors, including ferredoxin and the nickel-dependent carbon monoxide dehydrogenase. Does not require coenzyme A as cosubstrate. Enables anaerobic growth on oxalate which is used as energy source by the bacteria. The polypeptide is Oxalate oxidoreductase subunit delta (Moorella thermoacetica (strain ATCC 39073 / JCM 9320)).